The primary structure comprises 531 residues: Probable rhamnogalacturonate lyase A (531 aa).

The signal sequence occupies residues 1–20; it reads MLSKTSLLSLLSLAAGVVNA. 2 disulfide bridges follow: Cys50–Cys93 and Cys184–Cys193.

Belongs to the polysaccharide lyase 4 family.

The protein localises to the secreted. It carries out the reaction Endotype eliminative cleavage of L-alpha-rhamnopyranosyl-(1-&gt;4)-alpha-D-galactopyranosyluronic acid bonds of rhamnogalacturonan I domains in ramified hairy regions of pectin leaving L-rhamnopyranose at the reducing end and 4-deoxy-4,5-unsaturated D-galactopyranosyluronic acid at the non-reducing end.. In terms of biological role, pectinolytic enzymes consist of four classes of enzymes: pectin lyase, polygalacturonase, pectin methylesterase and rhamnogalacturonase. Degrades the rhamnogalacturonan I (RG-I) backbone of pectin. The chain is Probable rhamnogalacturonate lyase A (rglA) from Aspergillus niger (strain ATCC MYA-4892 / CBS 513.88 / FGSC A1513).